Here is a 40-residue protein sequence, read N- to C-terminus: Beta-glucosidase 1 (40 aa).

The catalysed reaction is Hydrolysis of terminal, non-reducing beta-D-glucosyl residues with release of beta-D-glucose.. This is Beta-glucosidase 1 from Passalora fulva (Tomato leaf mold).